Here is a 453-residue protein sequence, read N- to C-terminus: Glutamyl-tRNA(Gln) amidotransferase subunit A (453 aa).

Active-site charge relay system residues include Lys-53 and Ser-128. Catalysis depends on Ser-152, which acts as the Acyl-ester intermediate.

This sequence belongs to the amidase family. GatA subfamily. In terms of assembly, heterotrimer of A, B and C subunits.

The catalysed reaction is L-glutamyl-tRNA(Gln) + L-glutamine + ATP + H2O = L-glutaminyl-tRNA(Gln) + L-glutamate + ADP + phosphate + H(+). Its function is as follows. Allows the formation of correctly charged Gln-tRNA(Gln) through the transamidation of misacylated Glu-tRNA(Gln) in organisms which lack glutaminyl-tRNA synthetase. The reaction takes place in the presence of glutamine and ATP through an activated gamma-phospho-Glu-tRNA(Gln). This is Glutamyl-tRNA(Gln) amidotransferase subunit A from Helicobacter pylori (strain G27).